Consider the following 93-residue polypeptide: Integration host factor subunit beta (93 aa).

Belongs to the bacterial histone-like protein family. In terms of assembly, heterodimer of an alpha and a beta chain.

Functionally, this protein is one of the two subunits of integration host factor, a specific DNA-binding protein that functions in genetic recombination as well as in transcriptional and translational control. The polypeptide is Integration host factor subunit beta (Haemophilus ducreyi (strain 35000HP / ATCC 700724)).